The sequence spans 240 residues: DNA repair protein RecO (240 aa).

This sequence belongs to the RecO family.

Functionally, involved in DNA repair and RecF pathway recombination. This Wolbachia pipientis wMel protein is DNA repair protein RecO.